A 629-amino-acid polypeptide reads, in one-letter code: FAST kinase domain-containing protein 4 (629 aa).

Residues 559–617 (IAFLRWEFPNFNSRSKDLLGRFVLARRHVLAAGFLVVDVPYYEWLDLKSEWQKTAYLKD) enclose the RAP domain.

It belongs to the FAST kinase family.

Its subcellular location is the mitochondrion matrix. Its function is as follows. Plays a role in processing of mitochondrial RNA precursors and in stabilization of a subset of mature mitochondrial RNA species, such as MT-CO1, MT-CO2, MT-CYB, MT-CO3, MT-ND3, MT-ND5 and MT-ATP8/6. May play a role in cell cycle progression. The protein is FAST kinase domain-containing protein 4 (Tbrg4) of Rattus norvegicus (Rat).